Consider the following 291-residue polypeptide: G1/S-specific cyclin-D1 (291 aa).

Residue Thr282 is modified to Phosphothreonine.

The protein belongs to the cyclin family. Cyclin D subfamily. As to quaternary structure, interacts with the CDK4 and CDK6 protein kinases to form a serine/threonine kinase holoenzyme complex. The cyclin subunit imparts substrate specificity to the complex. Phosphorylation at Thr-282 by MAP kinases is required for ubiquitination and degradation by the DCX(AMBRA1) complex. Post-translationally, ubiquitinated by the DCX(AMBRA1) complex during the transition from G1 to S cell phase, leading to its degradation. The DCX(AMBRA1) complex represents the major regulator of CCND1 stability during the G1/S transition.

It localises to the nucleus. The protein localises to the cytoplasm. Functionally, regulatory component of the cyclin D1-CDK4 (DC) complex that phosphorylates and inhibits members of the retinoblastoma (RB) protein family including RB1 and regulates the cell-cycle during G(1)/S transition. Phosphorylation of RB1 allows dissociation of the transcription factor E2F from the RB/E2F complex and the subsequent transcription of E2F target genes which are responsible for the progression through the G(1) phase. Hypophosphorylates RB1 in early G(1) phase. Cyclin D-CDK4 complexes are major integrators of various mitogenenic and antimitogenic signals. In Danio rerio (Zebrafish), this protein is G1/S-specific cyclin-D1 (ccnd1).